A 78-amino-acid chain; its full sequence is NEDD8-like protein RUB3 (78 aa).

Gly76 is covalently cross-linked (Glycyl lysine isopeptide (Gly-Lys) (interchain with K-? in acceptor proteins)). A propeptide spanning residues 77-78 is cleaved from the precursor; the sequence is CC.

As to expression, detected in stems and flower buds, but not in leaves, mature flowers and seedlings.

Functionally, may function as a stable post-translational protein modifier. The sequence is that of NEDD8-like protein RUB3 (RUB3) from Arabidopsis thaliana (Mouse-ear cress).